The chain runs to 340 residues: Uroporphyrinogen decarboxylase (340 aa).

Residues 21–25, Asp-71, Tyr-148, Ser-203, and His-316 contribute to the substrate site; that span reads RQAGR.

Belongs to the uroporphyrinogen decarboxylase family. Homodimer.

It is found in the cytoplasm. The enzyme catalyses uroporphyrinogen III + 4 H(+) = coproporphyrinogen III + 4 CO2. It functions in the pathway porphyrin-containing compound metabolism; protoporphyrin-IX biosynthesis; coproporphyrinogen-III from 5-aminolevulinate: step 4/4. Catalyzes the decarboxylation of four acetate groups of uroporphyrinogen-III to yield coproporphyrinogen-III. This is Uroporphyrinogen decarboxylase from Campylobacter jejuni subsp. jejuni serotype O:6 (strain 81116 / NCTC 11828).